Here is a 754-residue protein sequence, read N- to C-terminus: C2H2 finger domain transcription factor crzA (754 aa).

Disordered regions lie at residues 1 to 51, 63 to 150, 187 to 227, 269 to 299, and 384 to 543; these read MASQ…TVTG, SFAN…FSDL, VHQQ…QGST, QGHRRAPSEVSEISSAAPSPYLSQHESFDGV, and GAEG…RVQK. The segment covering 30–44 has biased composition (low complexity); the sequence is HQQQQQQQHQQHQGQ. Composition is skewed to polar residues over residues 63-80 and 94-114; these read SFANSSFDPNSNNVSPSA and TPASQTDQNYANSLQIPQSYG. Residues 130-140 show a composition bias toward low complexity; sequence QQQSQQQHHQQ. The segment covering 141–150 has biased composition (polar residues); the sequence is PSLDDNFSDL. Positions 189–209 are enriched in low complexity; that stretch reads QQSHPTQIPSSHSSTSPQISP. Composition is skewed to polar residues over residues 210–227 and 279–293; these read LEQQQHSSPGPMSTQGST and SEISSAAPSPYLSQH. Low complexity-rich tracts occupy residues 459 to 472 and 491 to 515; these read STSRLRSSSTSSSL and RQQQSNPSSRDPSPSRSNRRLSTSS. C2H2-type zinc fingers lie at residues 548–570 and 576–598; these read FQCNLCPKRFTRAYNLRSHLRTH and FVCTVCGKAFARQHDRKRHEGLH. The C2H2-type 3; degenerate zinc finger occupies 604 to 635; sequence FVCQGELSRGGQWGCGRRFARADALGRHFRSE. The segment at 708–737 is disordered; it reads ADDPSDIGGRSSFDASSGNEFGFEDDDSGL.

It localises to the nucleus. The protein resides in the cytoplasm. In terms of biological role, transcription factor involved in the regulation of calcium ion homeostasis. Regulates genes encoding calcium transporters, transcription factors and genes that could be directly or indirectly involved in calcium metabolism. Supports especially pmcA, pmcB and pmcC expression encoding for calcium-translocating P-type ATPases. Binds target promoters at motif A[GT][CG]CA[AC][AG]. Plays an essential role germination, radial growth, and asexual development. Also plays a major role in proper chitin and glucan incorporation into the cell wall. Involved in the high-osmolarity glycerol response (HOG) signaling pathway. Required for pathogenicity in an experimental murine model of invasive pulmonary aspergillosis. The chain is C2H2 finger domain transcription factor crzA from Aspergillus fumigatus (strain ATCC MYA-4609 / CBS 101355 / FGSC A1100 / Af293) (Neosartorya fumigata).